The chain runs to 374 residues: Mitochondrial inner membrane protein oxa1-1 (374 aa).

The chain crosses the membrane as a helical span at residues 77–97; that stretch reads TINVYAGAPWWVSIILTTLGV. Residues 98–159 are Mitochondrial intermembrane-facing; it reads RLALTPVMIA…GIYLKHNVNP (62 aa). A helical transmembrane segment spans residues 160 to 180; it reads FAIFILPLTQSAVFFSFFYAI. Over 181–242 the chain is Mitochondrial matrix; that stretch reads RKMSRLSVDG…TIGNSTNWRT (62 aa). The chain crosses the membrane as a helical span at residues 243-263; sequence FFFLCCLLSPLLTAKLPAAIF. Residues 264–374 lie on the Mitochondrial intermembrane side of the membrane; that stretch reads MYWIPSSLFN…SKKNSKKQSN (111 aa).

This sequence belongs to the OXA1/ALB3/YidC family.

The protein resides in the mitochondrion inner membrane. Required for the insertion of integral membrane proteins into the mitochondrial inner membrane. Essential for the activity and assembly of cytochrome c oxidase. Not essential for viability, while oxa102 is essential. When both genes are deleted the cell is non-viable, suggesting that oxa101 act as a back-up for oxa102. The polypeptide is Mitochondrial inner membrane protein oxa1-1 (oxa101) (Schizosaccharomyces pombe (strain 972 / ATCC 24843) (Fission yeast)).